A 156-amino-acid polypeptide reads, in one-letter code: Small ribosomal subunit protein uS7 (156 aa).

Belongs to the universal ribosomal protein uS7 family. Part of the 30S ribosomal subunit. Contacts proteins S9 and S11.

Functionally, one of the primary rRNA binding proteins, it binds directly to 16S rRNA where it nucleates assembly of the head domain of the 30S subunit. Is located at the subunit interface close to the decoding center, probably blocks exit of the E-site tRNA. The protein is Small ribosomal subunit protein uS7 of Citrifermentans bemidjiense (strain ATCC BAA-1014 / DSM 16622 / JCM 12645 / Bem) (Geobacter bemidjiensis).